The chain runs to 115 residues: MNRNELFERLMKLEHHVEQLTTDMSELKDLTVELVEENVALQVENENLKRLMNKTEESVETHLDKDNYKHVKTPSPSKDNLAMLYREGFHICKGELFGKHRHGEDCLLCLNVLSD.

Zn(2+)-binding residues include His-90, Cys-92, Cys-106, and Cys-109.

This sequence belongs to the YabA family. Homotetramer. Interacts with both DnaA and DnaN, acting as a bridge between these two proteins. Zn(2+) is required as a cofactor.

The protein resides in the cytoplasm. The protein localises to the nucleoid. Involved in control of chromosome replication initiation. Inhibits the cooperative binding of DnaA to the oriC region, thus negatively regulating initiation of chromosome replication. Inhibits the ability of DnaA-ATP to form a helix on DNA; does not disassemble preformed DnaA-DNA helices. Decreases the residence time of DnaA on the chromosome at its binding sites (oriC, replication forks and promoter-binding sites). Tethers DnaA to the replication machinery via the DNA polymerase beta sliding clamp subunit (dnaN). Associates with oriC and other DnaA targets on the chromosome in a DnaA-dependent manner. The chain is Replication initiation control protein YabA from Staphylococcus epidermidis (strain ATCC 35984 / DSM 28319 / BCRC 17069 / CCUG 31568 / BM 3577 / RP62A).